We begin with the raw amino-acid sequence, 631 residues long: Shootin-1 (631 aa).

An N-acetylmethionine modification is found at methionine 1. 2 positions are modified to phosphoserine: serine 3 and serine 4. A coiled-coil region spans residues 7 to 353 (EKQLQLITSL…RVNQSENSVP (347 aa)). Serine 101 carries the post-translational modification Phosphoserine; by PAK1. Serine 249 bears the Phosphoserine mark. Disordered regions lie at residues 343–404 (KRVN…EVTD) and 417–508 (IKKG…KSMP). Positions 352 to 369 (VPPPPPPPPPLPPPPPNP) are enriched in pro residues. At serine 375 the chain carries Phosphoserine. A compositionally biased stretch (polar residues) spans 456-465 (LNKSTSSRSL). Serine 473 carries the post-translational modification Phosphoserine. Threonine 487 is subject to Phosphothreonine. Polar residues predominate over residues 490–505 (ADSSSPTGILATSESK). Serine 494 bears the Phosphoserine mark. Threonine 496 is subject to Phosphothreonine. Phosphoserine occurs at positions 506 and 515. The disordered stretch occupies residues 530–631 (FNNPCPLTPE…KTGETDSSNC (102 aa)). Position 537 is a phosphothreonine (threonine 537). Residues 590-602 (PQTKDQAAEKDPT) show a composition bias toward basic and acidic residues.

The protein belongs to the shootin family. In terms of assembly, interacts with L1CAM; this interaction occurs at axonal growth cones. Interacts with actin filament retrograde flow; this interaction is enhanced in a netrin-1- and PAK1-dependent manner and promotes F-actin-substrate coupling and concomitant formation of traction forces at axonal growth cones. Interacts with RUFY3. Interacts with PFN2. Interacts (via N-terminus) with KIF20B; this interaction is direct and promotes the association of SHTN1 to microtubules in primary neurons. Associates with microtubule. In terms of processing, phosphorylated on Ser-101 and Ser-249 by PAK1 through a CDC42- and RAC1-dependent signaling pathway, which enhances its association with F-actin retrograde flow in filopodia and lamellipodia of axonal growth cones. Phosphorylation on Ser-101 and Ser-249 is increased by netrin-1. In terms of tissue distribution, expressed in hippocampal neurons.

The protein resides in the perikaryon. Its subcellular location is the cell projection. It localises to the axon. The protein localises to the growth cone. It is found in the cytoplasm. The protein resides in the cytoskeleton. Its subcellular location is the filopodium. It localises to the lamellipodium. Involved in the generation of internal asymmetric signals required for neuronal polarization and neurite outgrowth. Mediates netrin-1-induced F-actin-substrate coupling or 'clutch engagement' within the axon growth cone through activation of CDC42, RAC1 and PAK1-dependent signaling pathway, thereby converting the F-actin retrograde flow into traction forces, concomitantly with filopodium extension and axon outgrowth. Plays a role in cytoskeletal organization by regulating the subcellular localization of phosphoinositide 3-kinase (PI3K) activity at the axonal growth cone. Also plays a role in regenerative neurite outgrowth. In the developing cortex, cooperates with KIF20B to promote both the transition from the multipolar to the bipolar stage and the radial migration of cortical neurons from the ventricular zone toward the superficial layer of the neocortex. Involved in the accumulation of phosphatidylinositol 3,4,5-trisphosphate (PIP3) in the growth cone of primary hippocampal neurons. The sequence is that of Shootin-1 from Mus musculus (Mouse).